A 623-amino-acid chain; its full sequence is MPHSDELDAGNVLAVENLNIAFMQDQQKIAAVRNLSFSLQRGETLAIVGESGSGKSVTALALMRLLEQAGGLVQCDKMLLRRRSRDVIELSEQSATQMRHVRGADMAMIFQEPMTSLNPVFTVGEQIAESIRLHQNASREEAMVEAKRMLDQVRIPEAQTILSRYPHQLSGGMRQRVMIAMALSCRPAVLIADEPTTALDVTIQAQILQLIKVLQKEMSMGVIFITHDMGVVAEIADRVLVMYQGEAVETGTVEQIFHAPQHPYTRALLAAVPQLGAMKGLDYPRRFPLISLEHPAKQAPPIEQKTVVDGEPVLRVRNLVTRFSLRSGLLNRVTREVHAVEKVSFDLWPGETLSLVGESGSGKSTTGRALLRLVESQGGEIIFNGQRIDTLSPGKLQALRRDIQFIFQDPYASLDPRQTIGDSIIEPLRVHGLLPGKDAVARVAWLLERVGLLPEHAWRYPHEFSGGQRQRICIARALALNPKVIIADEAVSALDVSIRGQIINLLLDLQRDFGIAYLFISHDMAVVERISHRVAVMYLGQIVEIGPRRAVFENPQHPYTRKLLAAVPVAEPSRQRPQRVLLSDDLPSNIHLRGEEVAAVSLQCVGPGHYVAQPQSEYAFMRR.

ABC transporter domains follow at residues Val-15–Leu-269 and Leu-314–Leu-564. ATP contacts are provided by residues Gly-49–Ser-56 and Gly-357–Ser-364.

It belongs to the ABC transporter superfamily. Glutathione importer (TC 3.A.1.5.11) family. As to quaternary structure, the complex is composed of two ATP-binding proteins (GsiA), two transmembrane proteins (GsiC and GsiD) and a solute-binding protein (GsiB).

It is found in the cell inner membrane. The enzyme catalyses glutathione(out) + ATP + H2O = glutathione(in) + ADP + phosphate + H(+). Part of the ABC transporter complex GsiABCD involved in glutathione import. Responsible for energy coupling to the transport system. The protein is Glutathione import ATP-binding protein GsiA of Shigella dysenteriae serotype 1 (strain Sd197).